A 124-amino-acid polypeptide reads, in one-letter code: Fluoride-specific ion channel FluC 2 (124 aa).

4 consecutive transmembrane segments (helical) span residues 9–29 (LGIF…STWL), 34–54 (DFPW…IYLV), 67–87 (LILA…SLML), and 99–119 (LSLI…AYYL). The Na(+) site is built by G77 and T80.

It belongs to the fluoride channel Fluc/FEX (TC 1.A.43) family.

The protein resides in the cell membrane. It catalyses the reaction fluoride(in) = fluoride(out). Na(+) is not transported, but it plays an essential structural role and its presence is essential for fluoride channel function. Functionally, fluoride-specific ion channel. Important for reducing fluoride concentration in the cell, thus reducing its toxicity. The sequence is that of Fluoride-specific ion channel FluC 2 from Streptococcus pneumoniae serotype 4 (strain ATCC BAA-334 / TIGR4).